Here is a 131-residue protein sequence, read N- to C-terminus: Small ribosomal subunit protein uS8 (131 aa).

This sequence belongs to the universal ribosomal protein uS8 family. As to quaternary structure, part of the 30S ribosomal subunit. Contacts proteins S5 and S12.

Functionally, one of the primary rRNA binding proteins, it binds directly to 16S rRNA central domain where it helps coordinate assembly of the platform of the 30S subunit. The chain is Small ribosomal subunit protein uS8 from Erythrobacter litoralis (strain HTCC2594).